The following is a 282-amino-acid chain: Energy-coupling factor transporter ATP-binding protein EcfA1 (282 aa).

An ABC transporter domain is found at 9-243 (IEIDNLSFKY…NDELLNIGLD (235 aa)). 43–50 (GHNGSGKS) contacts ATP.

Belongs to the ABC transporter superfamily. Energy-coupling factor EcfA family. In terms of assembly, forms a stable energy-coupling factor (ECF) transporter complex composed of 2 membrane-embedded substrate-binding proteins (S component), 2 ATP-binding proteins (A component) and 2 transmembrane proteins (T component).

The protein localises to the cell membrane. ATP-binding (A) component of a common energy-coupling factor (ECF) ABC-transporter complex. Unlike classic ABC transporters this ECF transporter provides the energy necessary to transport a number of different substrates. The protein is Energy-coupling factor transporter ATP-binding protein EcfA1 of Ligilactobacillus salivarius (strain UCC118) (Lactobacillus salivarius).